The sequence spans 382 residues: Kelch domain-containing protein 3 (382 aa).

Kelch repeat units follow at residues 25 to 77 (RVYS…PYMR), 88 to 138 (TVFL…VLGK), 139 to 189 (TMYI…TMLG), 191 to 249 (HMYV…GYNG), and 251 to 301 (LYIF…IVGD).

As to quaternary structure, component of a CRL2(KLHDC3) complex, also named ECS(KLHDC3) complex, composed of CUL2, Elongin BC (ELOB and ELOC), RBX1 and substrate-specific adapter KLHDC3. May form oligomers as a KLHDC3-ELOB-ELOC complex; this interaction is likely autoinhibitory for the E3 ligase complex.

It is found in the cytoplasm. It functions in the pathway protein modification; protein ubiquitination. In terms of biological role, substrate-recognition component of a Cul2-RING (CRL2) E3 ubiquitin-protein ligase complex of the DesCEND (destruction via C-end degrons) pathway, which recognizes a C-degron located at the extreme C terminus of target proteins, leading to their ubiquitination and degradation. The C-degron recognized by the DesCEND pathway is usually a motif of less than ten residues and can be present in full-length proteins, truncated proteins or proteolytically cleaved forms. The CRL2(KLHDC3) complex specifically recognizes proteins with a glycine (Gly) at the C-terminus, leading to their ubiquitination and degradation: recognizes the C-terminal -Arg-(Xaa)n-Arg-Gly, -Arg-(Xaa)n-Lys-Gly, and -Arg-(Xaa)n-Gln-Gly degrons. The CRL2(KLHDC3) complex mediates ubiquitination and degradation of truncated SELENOV and SEPHS2 selenoproteins produced by failed UGA/Sec decoding, which end with a glycine. May be involved in meiotic recombination process. The chain is Kelch domain-containing protein 3 from Bos taurus (Bovine).